The primary structure comprises 303 residues: Methionyl-tRNA formyltransferase (303 aa).

Ser111–Pro114 provides a ligand contact to (6S)-5,6,7,8-tetrahydrofolate.

Belongs to the Fmt family.

It carries out the reaction L-methionyl-tRNA(fMet) + (6R)-10-formyltetrahydrofolate = N-formyl-L-methionyl-tRNA(fMet) + (6S)-5,6,7,8-tetrahydrofolate + H(+). Functionally, attaches a formyl group to the free amino group of methionyl-tRNA(fMet). The formyl group appears to play a dual role in the initiator identity of N-formylmethionyl-tRNA by promoting its recognition by IF2 and preventing the misappropriation of this tRNA by the elongation apparatus. This is Methionyl-tRNA formyltransferase from Ehrlichia canis (strain Jake).